The sequence spans 134 residues: Profilin-2 (134 aa).

A disulfide bridge links cysteine 13 with cysteine 118. Residues alanine 84–threonine 100 carry the Involved in PIP2 interaction motif. Position 114 is a phosphothreonine (threonine 114).

It belongs to the profilin family. In terms of assembly, occurs in many kinds of cells as a complex with monomeric actin in a 1:1 ratio. Post-translationally, phosphorylated by MAP kinases.

It is found in the cytoplasm. Its subcellular location is the cytoskeleton. Its function is as follows. Binds to actin and affects the structure of the cytoskeleton. At high concentrations, profilin prevents the polymerization of actin, whereas it enhances it at low concentrations. By binding to PIP2, it inhibits the formation of IP3 and DG. This Olea europaea (Common olive) protein is Profilin-2 (PRO2).